Here is a 102-residue protein sequence, read N- to C-terminus: uncharacterized protein (102 aa).

2 disordered regions span residues 1 to 21 (MKRM…GAGE) and 33 to 71 (GSGT…SACT). Topologically, residues 1–79 (MKRMIRSHGR…CTRTDHQKAD (79 aa)) are extracellular. The segment covering 56 to 71 (SSGTRRGSANETSACT) has biased composition (polar residues). Asn-65 carries an N-linked (GlcNAc...) asparagine; by host glycan. The helical transmembrane segment at 80–97 (IGLWFMFLVFGLCSWLAM) threads the bilayer. The Cytoplasmic segment spans residues 98-102 (RYRAQ).

It belongs to the HHV-5 UL15A protein family.

The protein localises to the host membrane. This is an uncharacterized protein from Human cytomegalovirus (strain Merlin) (HHV-5).